A 360-amino-acid polypeptide reads, in one-letter code: MKLSTTPAQDGFYFPAEFQPVSEVWLAWPERKDNWRDDALPAQETFARIANLIAEVTKVCVAVCSHNFDRARQMLHSDVRLVEIPFNDAWMRDIGPTVLVNQAGERRGISWQFNAWGGEYNGLYDNWQQDDLVAGSVCDIIGIDYYRAPFVLEGGAIHTDGEGTLYTTEECLLSPGRNPQLSKAQIEEQLKVYLGIEKIIWLPNGLFNDETDGHVDNLMHVIAPGKVVLSWTDDPSDPQYALSRQAEQVLKSQHDAKGREIEIVRLPLPGPLHYSEREANGIDASSGMSRQAGERLSASYANFLIVNGHVFLPMLDEDTDAIAIDILQNAMPEYQIIAIPSREVLLGGGNIHCITQQIPA.

Catalysis depends on cysteine 353, which acts as the Amidino-cysteine intermediate.

It belongs to the agmatine deiminase family.

The catalysed reaction is agmatine + H2O = N-carbamoylputrescine + NH4(+). The polypeptide is Putative agmatine deiminase (Vibrio parahaemolyticus serotype O3:K6 (strain RIMD 2210633)).